Here is a 329-residue protein sequence, read N- to C-terminus: tRNA-modifying protein YgfZ (329 aa).

The folate site is built by Trp-32 and Trp-190.

It belongs to the tRNA-modifying YgfZ family.

It localises to the cytoplasm. In terms of biological role, folate-binding protein involved in regulating the level of ATP-DnaA and in the modification of some tRNAs. It is probably a key factor in regulatory networks that act via tRNA modification, such as initiation of chromosomal replication. The chain is tRNA-modifying protein YgfZ from Photobacterium profundum (strain SS9).